The following is a 569-amino-acid chain: MKTLDVHALHEGIQHTIEKLDKQKQQLEKLEKSVEHLAGMKDALKGKGGDAIRTFYEECHKPFLLFFGIFIDEYKKVLKQTQHAISSVESNSHGMIAEAFLSHDARHGVKHAREVTEQLTDAVNRQTSAIDHIVSLPTVNDSFFRMETEQAERLISDTLNKLFQFDGQQTQALEAAKSDFQTMKKYIDQLETMYTGPKIEITGYKSGSILKSQEEENINQIFGAINPQMKQADDSPMEMMLKKLAENEKSKVDSVVKTGDSKKVSKNIIVINGKVYNTSEHREHIKTDFSNAEVKQVVYNDTLYNVYISGNDMKLEPVVSLSDIKVDENGYVKILETAVELTGVYDLFKAATGRDPVSGEKVTGKDRVVASINSVPFAKIAKLEKLIDINKLINNGKKAKKASEVKNVAKDKGKIANDVSGSANKINSDLIKKYARDIEQRTGRELPKNQIDKLKEALRNKEYKKMSPIETAKHRTKFDKVKNKVIKEWEENTGQKWPVYKENVVSEKTGKIIRKKGDKYDAHHIIENTFGGEHEWWNMHPAKFPNEHQAGIHGTGSPANELFKGGKKK.

The LXG domain maps to 1 to 235 (MKTLDVHALH…NPQMKQADDS (235 aa)). Residues 8-91 (ALHEGIQHTI…QHAISSVESN (84 aa)) are a coiled coil. The segment at 548-569 (HQAGIHGTGSPANELFKGGKKK) is disordered.

The protein in the N-terminal section; belongs to the LXG family. As to quaternary structure, probably interacts with cognate immunity protein YxxD but not with non-cognate immunity proteins. The interaction inhibits the toxic activity of YxxD.

It is found in the secreted. Its function is as follows. Toxic component of one of 6 LXG toxin-immunity modules in this strain. They promote kin selection, mediate competition in biofilms, and drive spatial segregation of different strains, indicating that LXG toxins may help avoid warfare between strains in biofilms. Mediates intercellular competition during biofilm formation; disruption of the operon disadvantages the bacteria, but overexpression of the cognate immunity protein restores growth in competition with wild-type. Overexpression alone in situ causes growth arrest but not cell lysis, a large decrease in chromosomal DNA content and the production of anucleate cells. No effect is seen on rRNA. Co-overexpression with cognate immunity protein YxxD does not cause growth arrest. The toxic effect is not dependent on the epsA and tapA operons which are required for biofilm formation. The protein is Toxin YxiD (yxiD) of Bacillus subtilis (strain 168).